The following is a 710-amino-acid chain: MTKRDRTIYSCDACRSRKIKCNRQTPCASCHKSKRDCVYTVSRQRDAQITNRKLDKKTYHQISAIEKKISALEGKKGLLQVETINFNKSFTDQTPLVELQSLFPYLLLSKQDPGCVLVRHHCHHLLEKDPRYFEYSQLLADLSLTKRHHLTARAKALLGEAYIPSPQEGHTIDQLKHVLSLNPNFRFAGNFADPLTSFFSLIPPAWANKQLVDTFFQHIYPVIPIIDETDFNTSINRVLGPQIDGHYINSFPSIGSADDLPFLALFLLVLRISYMYTPGACPVSYDTLRAAETIMKEFDITKTHSLTALQAEIMLRFYKIVAPESYTQSNYVQVSVGVLIQNCYSLALHRDPEYIGEHNPKQQHLRRKIWHLLLRMEVIDSAIFQTILSSNPDASDTKLPQLIDQAPPMEQSIVKHIWRSTDLFVSLRKLVEINSKTSEDTPLETVLELLVEVETKLQAFLATIDSEASTVFYNDLVIFSVNFLLVYMYYSLYLFKGPTPLGNKYLLKSAQILFVDLARTRSTSLFLAYFNLNYIHLVLMITNFLRMRVDCIIHRHLRAQDSSVQDLQCCRYFLKIIFFSHVKELGNYSSSHKYAWQMRKVYLTLAKIMERSSDVLISNDPELVKSAAVDIPVKEINKLLEQYINFKGFTPTTLFDPTDNELIDEMQHENLWNAMENIEYSEKVYSGWIDAIKNVPSNWDWDYWDFLKIS.

A DNA-binding region (zn(2)-C6 fungal-type) is located at residues 11 to 37; that stretch reads CDACRSRKIKCNRQTPCASCHKSKRDC. 2 helical membrane-spanning segments follow: residues 475 to 495 and 525 to 545; these read DLVI…LYLF and LFLA…TNFL.

It localises to the nucleus. It is found in the membrane. Transcription factor that controls the expression of CDR1, the major multidrug efflux pump. Required for yeast cell adherence to silicone substrate and plays a role in virulence. The protein is multidrug resistance regulator 2 of Candida albicans (strain SC5314 / ATCC MYA-2876) (Yeast).